The sequence spans 1010 residues: Polyhomeotic-like protein 1 (1010 aa).

A compositionally biased stretch (low complexity) spans 1-22; sequence METESEQNSSSTNGSSSSGASS. 6 disordered regions span residues 1 to 25, 212 to 243, 259 to 312, 444 to 506, 565 to 588, and 646 to 678; these read METE…SRPQ, NQQA…LSQT, GQSL…TGVV, QQQG…SKPP, GAVQ…PGAL, and KRKA…SPKV. A compositionally biased stretch (polar residues) spans 212-228; it reads NQQASAQGPQMPGSTQK. Residues 279–292 are compositionally biased toward gly residues; that stretch reads MGPGGGGQAPGGLG. Positions 453 to 463 are enriched in pro residues; sequence PQPPQVPPTQQ. Residues 464–480 show a composition bias toward low complexity; that stretch reads VPPSQSQQQAQTLVVQP. Residues 488 to 500 show a composition bias toward pro residues; that stretch reads TLPPEPTSKPPIP. The span at 575 to 587 shows a compositional bias: low complexity; that stretch reads ASSPPSSQAAPGA. Residue Ser651 is modified to Phosphoserine. A Glycyl lysine isopeptide (Lys-Gly) (interchain with G-Cter in SUMO2) cross-link involves residue Lys769. The segment at 772 to 794 is disordered; sequence QAGLPTGLNESQPSGPLGGDSPS. The FCS-type zinc finger occupies 797–831; the sequence is LEKKANLLKCEYCGKYAPAEQFRGSKRFCSMTCAK. Zn(2+)-binding residues include Cys806, Cys809, Cys825, and Cys829. Residues 854–928 are disordered; that stretch reads ASYARVRRRG…LGNTITTPST (75 aa). At Ser904 the chain carries Phosphoserine. At Thr928 the chain carries Phosphothreonine. One can recognise an SAM domain in the interval 946–1010; that stretch reads WSVEEVYEFI…CAKINVLKET (65 aa).

Homodimer. Component of a PRC1-like complex. Interacts with the SAM domain of SCMH1 via its SAM domain in vitro. Interacts with RNF2 and CBX7. Interacts with PHC2. Interacts with BMI1. As to expression, highly expressed in testis with lower levels in most other tissues. Expressed in embryonic stem cells.

It is found in the nucleus. In terms of biological role, component of a Polycomb group (PcG) multiprotein PRC1-like complex, a complex class required to maintain the transcriptionally repressive state of many genes, including Hox genes, throughout development. PcG PRC1 complex acts via chromatin remodeling and modification of histones; it mediates monoubiquitination of histone H2A 'Lys-119', rendering chromatin heritably changed in its expressibility. Required for proper control of cellular levels of GMNN expression. In Mus musculus (Mouse), this protein is Polyhomeotic-like protein 1.